Here is a 335-residue protein sequence, read N- to C-terminus: Tryptophan--tRNA ligase (335 aa).

ATP contacts are provided by residues 9–11 (QST) and 17–18 (GN). Residues 10-18 (STNSLTLGN) carry the 'HIGH' region motif. Asp137 is a binding site for L-tryptophan. ATP is bound by residues 149-151 (GKD), Ile189, and 198-202 (KMSKS). The short motif at 198 to 202 (KMSKS) is the 'KMSKS' region element.

The protein belongs to the class-I aminoacyl-tRNA synthetase family. In terms of assembly, homodimer.

The protein localises to the cytoplasm. It catalyses the reaction tRNA(Trp) + L-tryptophan + ATP = L-tryptophyl-tRNA(Trp) + AMP + diphosphate + H(+). Functionally, catalyzes the attachment of tryptophan to tRNA(Trp). The sequence is that of Tryptophan--tRNA ligase from Malacoplasma penetrans (strain HF-2) (Mycoplasma penetrans).